We begin with the raw amino-acid sequence, 97 residues long: Aspartyl/glutamyl-tRNA(Asn/Gln) amidotransferase subunit C (97 aa).

Belongs to the GatC family. In terms of assembly, heterotrimer of A, B and C subunits.

It catalyses the reaction L-glutamyl-tRNA(Gln) + L-glutamine + ATP + H2O = L-glutaminyl-tRNA(Gln) + L-glutamate + ADP + phosphate + H(+). The catalysed reaction is L-aspartyl-tRNA(Asn) + L-glutamine + ATP + H2O = L-asparaginyl-tRNA(Asn) + L-glutamate + ADP + phosphate + 2 H(+). In terms of biological role, allows the formation of correctly charged Asn-tRNA(Asn) or Gln-tRNA(Gln) through the transamidation of misacylated Asp-tRNA(Asn) or Glu-tRNA(Gln) in organisms which lack either or both of asparaginyl-tRNA or glutaminyl-tRNA synthetases. The reaction takes place in the presence of glutamine and ATP through an activated phospho-Asp-tRNA(Asn) or phospho-Glu-tRNA(Gln). The sequence is that of Aspartyl/glutamyl-tRNA(Asn/Gln) amidotransferase subunit C from Picosynechococcus sp. (strain ATCC 27264 / PCC 7002 / PR-6) (Agmenellum quadruplicatum).